Consider the following 997-residue polypeptide: Protein HIR2 (997 aa).

5 WD repeats span residues 10–48 (GISGNVTSLVTIDAEYVVVCGSRGDIQVWHQQQLLDTAF), 117–152 (VSQSIITDVKWDSLLDILFVLTDRPCKIHLFDTRSA), 153–194 (NKKE…VVYH), 274–319 (VHSP…PLFA), and 323–362 (ISDSAINDMIWSSNGLTLFAVSNDNVLYTFAFLQDDLGKT). Residues 408–584 (ADNSSNILST…RKPKEDALGN (177 aa)) are disordered. A compositionally biased stretch (polar residues) spans 409–446 (DNSSNILSTDTNTNEKNLSTVNTTEPQTNSQSSSYNNK). The span at 464–480 (SDEKAKNLEARPIEAKS) shows a compositional bias: basic and acidic residues. Residues 491 to 501 (SKSSSVTTSDN) show a composition bias toward polar residues. Residues 518-538 (TEKKTKPDKKSIKSENGESKV) are compositionally biased toward basic and acidic residues. Polar residues predominate over residues 539–567 (NKAQNTISPKESNTTDNKSTTPDFKNPSY). 2 WD repeats span residues 665–706 (LFQD…IIPP) and 708–745 (TIGVPISFLEACGKYLLCVSSIGELYCWNIASSKLEFP).

The protein belongs to the WD repeat HIR1 family.

Its subcellular location is the nucleus. Functionally, required for replication-independent chromatin assembly and for the periodic repression of histone gene transcription during the cell cycle. This is Protein HIR2 (HIR2) from Candida glabrata (strain ATCC 2001 / BCRC 20586 / JCM 3761 / NBRC 0622 / NRRL Y-65 / CBS 138) (Yeast).